We begin with the raw amino-acid sequence, 520 residues long: Bifunctional purine biosynthesis protein PurH (520 aa).

In terms of domain architecture, MGS-like spans 1-146 (MAPVALLSVS…KNHADVAVLT (146 aa)).

The protein belongs to the PurH family.

It carries out the reaction (6R)-10-formyltetrahydrofolate + 5-amino-1-(5-phospho-beta-D-ribosyl)imidazole-4-carboxamide = 5-formamido-1-(5-phospho-D-ribosyl)imidazole-4-carboxamide + (6S)-5,6,7,8-tetrahydrofolate. It catalyses the reaction IMP + H2O = 5-formamido-1-(5-phospho-D-ribosyl)imidazole-4-carboxamide. Its pathway is purine metabolism; IMP biosynthesis via de novo pathway; 5-formamido-1-(5-phospho-D-ribosyl)imidazole-4-carboxamide from 5-amino-1-(5-phospho-D-ribosyl)imidazole-4-carboxamide (10-formyl THF route): step 1/1. It participates in purine metabolism; IMP biosynthesis via de novo pathway; IMP from 5-formamido-1-(5-phospho-D-ribosyl)imidazole-4-carboxamide: step 1/1. This Synechococcus sp. (strain CC9902) protein is Bifunctional purine biosynthesis protein PurH.